The sequence spans 319 residues: Dehydrogenase/reductase SDR family member 9 (319 aa).

A signal peptide spans 1–20 (MLLWVLALLFLCAFLWNYKG). NAD(+)-binding positions include 34-58 (ITGC…RVIA) and D83. S164 contributes to the substrate binding site. The Proton acceptor role is filled by Y176. NAD(+) is bound at residue K180.

The protein belongs to the short-chain dehydrogenases/reductases (SDR) family. Homotetramer. Highly expressed in epithelium of estrus uterus.

The protein localises to the microsome membrane. It is found in the endoplasmic reticulum membrane. The catalysed reaction is 3beta-hydroxy-5alpha-pregnane-20-one + NAD(+) = 5alpha-pregnane-3,20-dione + NADH + H(+). The enzyme catalyses 17beta-hydroxy-5alpha-androstan-3-one + NAD(+) = 5alpha-androstan-3,17-dione + NADH + H(+). It catalyses the reaction androsterone + NAD(+) = 5alpha-androstan-3,17-dione + NADH + H(+). It carries out the reaction 5alpha-androstane-3alpha,17beta-diol + NAD(+) = 17beta-hydroxy-5alpha-androstan-3-one + NADH + H(+). The catalysed reaction is all-trans-retinol + NAD(+) = all-trans-retinal + NADH + H(+). The enzyme catalyses 3alpha-hydroxy-5alpha-pregnan-20-one + NAD(+) = 5alpha-pregnane-3,20-dione + NADH + H(+). Its function is as follows. 3-alpha-hydroxysteroid dehydrogenase that converts 3-alpha-tetrahydroprogesterone (allopregnanolone) to dihydroxyprogesterone and 3-alpha-androstanediol to dihydroxyprogesterone. Plays also role in the biosynthesis of retinoic acid from retinaldehyde. Can utilize both NADH and NADPH. The protein is Dehydrogenase/reductase SDR family member 9 (Dhrs9) of Rattus norvegicus (Rat).